Reading from the N-terminus, the 362-residue chain is Peptide chain release factor 1 (362 aa).

Glutamine 237 bears the N5-methylglutamine mark.

It belongs to the prokaryotic/mitochondrial release factor family. Post-translationally, methylated by PrmC. Methylation increases the termination efficiency of RF1.

Its subcellular location is the cytoplasm. Its function is as follows. Peptide chain release factor 1 directs the termination of translation in response to the peptide chain termination codons UAG and UAA. The protein is Peptide chain release factor 1 of Marinomonas sp. (strain MWYL1).